The sequence spans 123 residues: Ig heavy chain V region HPCM6 (123 aa).

Positions 1–114 (EVKLVESGGG…YPHWYFDVWG (114 aa)) constitute an Ig-like domain.

The chain is Ig heavy chain V region HPCM6 from Mus musculus (Mouse).